The chain runs to 839 residues: MATIRHIMDWLRPTFTPLAGVKSRQECIAHYGDDWALMITQSRMTLSAEAQVNAWYEGGAEVNGSIPSVEGNAAAPQAAAVVAEPPHPSPAENEGEDASWVAALPAPPTYEVVQGRAPTLEEIHGASRLQIVPYTGRARVIGEDEVLPSPVLSSIWRATRCPGRILRVLGTLLKPGACQRHLEDLREVQPQVCVGNPCEVKLQEEGAPMAYMNAQSIAMELRAMFGWQAATPANRELGNRVARDILRDGCGATREQIWYMSSLALHMWFQPTLCDLAIKAGAQNFLVGEVYARSGVETKTRPKILSPQIKVKLAARPRPVKRVSYNVDVLGPSADYGVHNNSLNNLVRGVNERVFYTNNQGKLPLAPAAGAYQQIDCAALKQFRVTPWSLDDVWMSYKGSQRVRYKQAVDSLGMRPLSKSDARVSTFIKAEKVNFRAKPDPAPRVIQPRDPRFNAVFAKYIKPLEPLLYKALGKLYKYPCVAKGFNAVETGEIVAKKWKMFANPVCVGLDASRFDQHVSVDALRFTHGVYRRFVKSSEFDKLLRWMYTNRCRGAAKDGFVKYTVNGCRMSGDMDTALGNCVLMVLMTRHLLMSLGIPHELLDNGDDCIVIMDQEHLAKFNDAVKPYYSNLGFTMKVEEPVYSLERVDFCQTRPVYDGKKWRMVRHITSVAKDCCTVINWEQLPSWLSAIGECGIAVAGGIPVHNSFLRYLMRVGGTKGGIENHLLWKNEGLSWYRMGMDLSHEKVVSDEARLSFQTAFGISPTMQRALEDLYDGLGAPTVNGCDYRTVKTRDCREIECMPPRHYNHYFIDCGMQPAGSQEQYVNPGYTIFEAAALWAQC.

The RdRp catalytic domain occupies 504 to 619 (PVCVGLDASR…IMDQEHLAKF (116 aa)).

It carries out the reaction RNA(n) + a ribonucleoside 5'-triphosphate = RNA(n+1) + diphosphate. Functionally, RNA-dependent RNA polymerase replicates the viral genome. The protein is RNA-directed RNA polymerase of Groundnut rosette virus (strain MC1) (GRV).